The chain runs to 295 residues: sn-glycerol-3-phosphate transport system permease protein UgpA (295 aa).

Over 1-11 the chain is Cytoplasmic; the sequence is MSSSRPVFRSR. The helical transmembrane segment at 12-32 threads the bilayer; that stretch reads WLPYLLVAPQLIITVIFFIWP. The Periplasmic portion of the chain corresponds to 33–80; sequence AGEALWYSLQSVDPFGFSSQFVGLDNFVTLFHDSYYLDAFWTTIKFST. In terms of domain architecture, ABC transmembrane type-1 spans 76-284; sequence IKFSTFVTVS…FLVIVLTVVQ (209 aa). A helical membrane pass occupies residues 81–101; the sequence is FVTVSGLLVSLFFAALVEYIV. Residues 102 to 109 are Cytoplasmic-facing; it reads RGSRFYQT. Residues 110–130 traverse the membrane as a helical segment; the sequence is LMLLPYAVAPAVAAVLWIFLF. Residues 131 to 156 are Periplasmic-facing; the sequence is NPGRGLITHFLAEFGYDWNHAQNSGQ. A helical transmembrane segment spans residues 157 to 177; sequence AMFLVVFASVWKQISYNFLFF. At 178–207 the chain is on the cytoplasmic side; it reads YAALQSIPRSLIEAAAIDGAGPIRRFFKIA. The helical transmembrane segment at 208–228 threads the bilayer; the sequence is LPLIAPVSFFLLVVNLVYAFF. Residues 229–262 are Periplasmic-facing; sequence DTFPVIDAATSGGPVQATTTLIYKIYREGFTGLD. A helical membrane pass occupies residues 263–283; that stretch reads LASSAAQSVVLMFLVIVLTVV. The Cytoplasmic segment spans residues 284–295; that stretch reads QFRYVEGKVRYQ.

Belongs to the binding-protein-dependent transport system permease family. UgpAE subfamily. As to quaternary structure, the complex is composed of two ATP-binding proteins (UgpC), two transmembrane proteins (UgpA and UgpE) and a solute-binding protein (UgpB).

It is found in the cell inner membrane. In terms of biological role, part of the ABC transporter complex UgpBAEC involved in sn-glycerol-3-phosphate (G3P) import. Probably responsible for the translocation of the substrate across the membrane. The chain is sn-glycerol-3-phosphate transport system permease protein UgpA (ugpA) from Escherichia coli O6:K15:H31 (strain 536 / UPEC).